A 206-amino-acid chain; its full sequence is Large ribosomal subunit protein eL8 (206 aa).

This sequence belongs to the eukaryotic ribosomal protein eL8 family. Component of the large ribosomal subunit.

It localises to the cytoplasm. This is Large ribosomal subunit protein eL8 (RPL7A) from Encephalitozoon cuniculi (strain GB-M1) (Microsporidian parasite).